The sequence spans 194 residues: Phosphoheptose isomerase (194 aa).

The region spanning 31 to 186 (ICQRFQAGNK…CEQVESRLFA (156 aa)) is the SIS domain. A substrate-binding site is contributed by 46–48 (NGG). H55 and E59 together coordinate Zn(2+). Substrate contacts are provided by residues E59, 88-89 (ND), 114-116 (STS), S119, and Q166. Positions 166 and 174 each coordinate Zn(2+).

The protein belongs to the SIS family. GmhA subfamily. Zn(2+) serves as cofactor.

The protein resides in the cytoplasm. It carries out the reaction 2 D-sedoheptulose 7-phosphate = D-glycero-alpha-D-manno-heptose 7-phosphate + D-glycero-beta-D-manno-heptose 7-phosphate. It participates in carbohydrate biosynthesis; D-glycero-D-manno-heptose 7-phosphate biosynthesis; D-glycero-alpha-D-manno-heptose 7-phosphate and D-glycero-beta-D-manno-heptose 7-phosphate from sedoheptulose 7-phosphate: step 1/1. In terms of biological role, catalyzes the isomerization of sedoheptulose 7-phosphate in D-glycero-D-manno-heptose 7-phosphate. This chain is Phosphoheptose isomerase, found in Synechocystis sp. (strain ATCC 27184 / PCC 6803 / Kazusa).